A 204-amino-acid polypeptide reads, in one-letter code: Elongation factor Ts (204 aa).

The segment at 87–90 (TDFV) is involved in Mg(2+) ion dislocation from EF-Tu.

The protein belongs to the EF-Ts family.

It localises to the cytoplasm. Associates with the EF-Tu.GDP complex and induces the exchange of GDP to GTP. It remains bound to the aminoacyl-tRNA.EF-Tu.GTP complex up to the GTP hydrolysis stage on the ribosome. The chain is Elongation factor Ts from Frankia alni (strain DSM 45986 / CECT 9034 / ACN14a).